The following is a 793-amino-acid chain: Phenylalanine--tRNA ligase beta subunit (793 aa).

The tRNA-binding domain maps to 39–154 (TCSFSSIITA…ENTPLGESAC (116 aa)). In terms of domain architecture, B5 spans 403-481 (PQASTLSFRT…QPWKVENKKA (79 aa)). Mg(2+)-binding residues include D457, D463, E466, and E467. One can recognise an FDX-ACB domain in the interval 697–793 (PIYPSSFRDI…QINDTKGTID (97 aa)).

The protein belongs to the phenylalanyl-tRNA synthetase beta subunit family. Type 1 subfamily. Tetramer of two alpha and two beta subunits. It depends on Mg(2+) as a cofactor.

Its subcellular location is the cytoplasm. It carries out the reaction tRNA(Phe) + L-phenylalanine + ATP = L-phenylalanyl-tRNA(Phe) + AMP + diphosphate + H(+). In Chlamydia caviae (strain ATCC VR-813 / DSM 19441 / 03DC25 / GPIC) (Chlamydophila caviae), this protein is Phenylalanine--tRNA ligase beta subunit.